Here is a 163-residue protein sequence, read N- to C-terminus: MSYKKKRCLKSSIICKNKKAYYNYFIEEVFQSGLVLMGWEVKSIRLGQVNIIESYINNDNLNEMYLYNSIVQPLHTSSNYVSCDSSRKRKLLLHKNEIQYLCNKKNKIGSTLVALSLFWEKSWCKLNFGLAKGKTKIDKRASEKQNEWKKEKLKILKKVKFQN.

This sequence belongs to the SmpB family.

It localises to the cytoplasm. Required for rescue of stalled ribosomes mediated by trans-translation. Binds to transfer-messenger RNA (tmRNA), required for stable association of tmRNA with ribosomes. tmRNA and SmpB together mimic tRNA shape, replacing the anticodon stem-loop with SmpB. tmRNA is encoded by the ssrA gene; the 2 termini fold to resemble tRNA(Ala) and it encodes a 'tag peptide', a short internal open reading frame. During trans-translation Ala-aminoacylated tmRNA acts like a tRNA, entering the A-site of stalled ribosomes, displacing the stalled mRNA. The ribosome then switches to translate the ORF on the tmRNA; the nascent peptide is terminated with the 'tag peptide' encoded by the tmRNA and targeted for degradation. The ribosome is freed to recommence translation, which seems to be the essential function of trans-translation. The sequence is that of SsrA-binding protein from Buchnera aphidicola subsp. Schizaphis graminum (strain Sg).